The following is a 931-amino-acid chain: Chitin synthase 7 (931 aa).

Disordered regions lie at residues 1-34 (MVRHDPFTNSVSEDSSFTPSVNPSTPYPQSGHYR) and 56-92 (GDVGYGGRSRRHGSWASVNNEDNEELTPLTTGPASSS). Composition is skewed to polar residues over residues 7-28 (FTNSVSEDSSFTPSVNPSTPYP) and 83-92 (PLTTGPASSS). The N-linked (GlcNAc...) asparagine glycan is linked to N536. 3 consecutive transmembrane segments (helical) span residues 573 to 593 (IFSLIFSWFALANLWLTFSII), 615 to 635 (INLVFAWVYLAFLMLQLVLAL), and 647 to 667 (ILTLWVYAFLSFYLIVCSIIL). Residue N691 is glycosylated (N-linked (GlcNAc...) asparagine). The next 2 membrane-spanning stretches (helical) occupy residues 695 to 715 (GVLVAAIMSTIGIYLIASFLY) and 725 to 745 (FPQYMLLAPSFTNVLNIYAFC). The tract at residues 763-789 (LPAISSSKQKDGETAVVEEQQRSQGEL) is disordered. A glycan (N-linked (GlcNAc...) asparagine) is linked at N819. A helical transmembrane segment spans residues 826 to 846 (LVVVWLLTNAALAISIQTLNG). 2 N-linked (GlcNAc...) asparagine glycosylation sites follow: N866 and N874. A helical transmembrane segment spans residues 899–919 (AILWTTFALSMVRFIGCVFYW).

The protein belongs to the chitin synthase family. Class III subfamily.

The protein localises to the cell membrane. It carries out the reaction [(1-&gt;4)-N-acetyl-beta-D-glucosaminyl](n) + UDP-N-acetyl-alpha-D-glucosamine = [(1-&gt;4)-N-acetyl-beta-D-glucosaminyl](n+1) + UDP + H(+). Functionally, polymerizes chitin, a structural polymer of the cell wall and septum, by transferring the sugar moiety of UDP-GlcNAc to the non-reducing end of the growing chitin polymer. This chain is Chitin synthase 7, found in Cryptococcus neoformans var. grubii serotype A (strain H99 / ATCC 208821 / CBS 10515 / FGSC 9487) (Filobasidiella neoformans var. grubii).